The following is a 512-amino-acid chain: ATP synthase subunit alpha (512 aa).

169 to 176 provides a ligand contact to ATP; sequence GDRQTGKT.

This sequence belongs to the ATPase alpha/beta chains family. F-type ATPases have 2 components, CF(1) - the catalytic core - and CF(0) - the membrane proton channel. CF(1) has five subunits: alpha(3), beta(3), gamma(1), delta(1), epsilon(1). CF(0) has three main subunits: a(1), b(2) and c(9-12). The alpha and beta chains form an alternating ring which encloses part of the gamma chain. CF(1) is attached to CF(0) by a central stalk formed by the gamma and epsilon chains, while a peripheral stalk is formed by the delta and b chains.

The protein resides in the cell inner membrane. It carries out the reaction ATP + H2O + 4 H(+)(in) = ADP + phosphate + 5 H(+)(out). Produces ATP from ADP in the presence of a proton gradient across the membrane. The alpha chain is a regulatory subunit. In Dechloromonas aromatica (strain RCB), this protein is ATP synthase subunit alpha.